The chain runs to 337 residues: Cholinesterase 2 (337 aa).

Serine 99 functions as the Acyl-ester intermediate in the catalytic mechanism. Cysteines 153 and 165 form a disulfide. The Charge relay system role is filled by glutamate 224. N-linked (GlcNAc...) asparagine glycosylation is present at asparagine 290.

Belongs to the type-B carboxylesterase/lipase family.

The enzyme catalyses an acylcholine + H2O = a carboxylate + choline + H(+). This is Cholinesterase 2 (CHE2) from Branchiostoma lanceolatum (Common lancelet).